Reading from the N-terminus, the 353-residue chain is Photosystem II protein D1 (353 aa).

Residue T2 is modified to N-acetylthreonine. T2 is modified (phosphothreonine). A run of 3 helical transmembrane segments spans residues 29–46 (YIGW…TATS), 118–133 (HFLL…EWEL), and 142–156 (WIAV…AATA). A chlorophyll a-binding site is contributed by H118. Residue Y126 participates in pheophytin a binding. 2 residues coordinate [CaMn4O5] cluster: D170 and E189. Residues 197–218 (FHMLGVAGVFGGSLFSAMHGSL) form a helical membrane-spanning segment. Position 198 (H198) interacts with chlorophyll a. A quinone-binding positions include H215 and 264–265 (SF). H215 serves as a coordination point for Fe cation. H272 provides a ligand contact to Fe cation. The chain crosses the membrane as a helical span at residues 274–288 (FLAAWPVVGIWFTAL). Residues H332, E333, D342, and A344 each contribute to the [CaMn4O5] cluster site. A propeptide spanning residues 345-353 (ALEVPSING) is cleaved from the precursor.

Belongs to the reaction center PufL/M/PsbA/D family. PSII is composed of 1 copy each of membrane proteins PsbA, PsbB, PsbC, PsbD, PsbE, PsbF, PsbH, PsbI, PsbJ, PsbK, PsbL, PsbM, PsbT, PsbX, PsbY, PsbZ, Psb30/Ycf12, at least 3 peripheral proteins of the oxygen-evolving complex and a large number of cofactors. It forms dimeric complexes. The D1/D2 heterodimer binds P680, chlorophylls that are the primary electron donor of PSII, and subsequent electron acceptors. It shares a non-heme iron and each subunit binds pheophytin, quinone, additional chlorophylls, carotenoids and lipids. D1 provides most of the ligands for the Mn4-Ca-O5 cluster of the oxygen-evolving complex (OEC). There is also a Cl(-1) ion associated with D1 and D2, which is required for oxygen evolution. The PSII complex binds additional chlorophylls, carotenoids and specific lipids. is required as a cofactor. Post-translationally, tyr-161 forms a radical intermediate that is referred to as redox-active TyrZ, YZ or Y-Z. C-terminally processed by CTPA; processing is essential to allow assembly of the oxygen-evolving complex and thus photosynthetic growth.

The protein localises to the plastid. It localises to the chloroplast thylakoid membrane. It carries out the reaction 2 a plastoquinone + 4 hnu + 2 H2O = 2 a plastoquinol + O2. In terms of biological role, photosystem II (PSII) is a light-driven water:plastoquinone oxidoreductase that uses light energy to abstract electrons from H(2)O, generating O(2) and a proton gradient subsequently used for ATP formation. It consists of a core antenna complex that captures photons, and an electron transfer chain that converts photonic excitation into a charge separation. The D1/D2 (PsbA/PsbD) reaction center heterodimer binds P680, the primary electron donor of PSII as well as several subsequent electron acceptors. The chain is Photosystem II protein D1 from Agrostis stolonifera (Creeping bentgrass).